The chain runs to 333 residues: Gap junction alpha-4 protein (333 aa).

Over 1–20 (MGDWGFLEKLLDQVQEHSTV) the chain is Cytoplasmic. The chain crosses the membrane as a helical span at residues 21-40 (VGKIWLTVLFIFRILILGLA). At 41 to 76 (GESVWGDEQSDFECNTAQPGCTNVCYDQAFPISHIR) the chain is on the extracellular side. A helical transmembrane segment spans residues 77-99 (YWVLQFLFVSTPTLVYLGHVIYL). The Cytoplasmic segment spans residues 100 to 148 (SRREERLRQKEGELRALPAKDPRVERALASIERQMAKISVAEDGHLRIR). The helical transmembrane segment at 149–165 (GALMGTYVASVLCKSVL) threads the bilayer. The Extracellular segment spans residues 166-207 (EAGFLYGQWRLYGWTMEPVFVCQRSPCPYLVDCFVSRPTEKT). A helical transmembrane segment spans residues 208 to 230 (IFIIFMLVVGLISLVLNLLELAY). Over 231–333 (LLCRCLSRGV…SSSASKKQYV (103 aa)) the chain is Cytoplasmic. A disordered region spans residues 303–333 (SRAPLFLDPPPQTGRKSPSRPSSSASKKQYV). Over residues 317–333 (RKSPSRPSSSASKKQYV) the composition is skewed to low complexity.

The protein belongs to the connexin family. Alpha-type (group II) subfamily. A connexon is composed of a hexamer of connexins.

The protein localises to the cell membrane. Its subcellular location is the cell junction. The protein resides in the gap junction. One gap junction consists of a cluster of closely packed pairs of transmembrane channels, the connexons, through which materials of low MW diffuse from one cell to a neighboring cell. The polypeptide is Gap junction alpha-4 protein (GJA4) (Bos taurus (Bovine)).